The primary structure comprises 206 residues: MLSAQLEAYLAEINLPATAEQKKQLIDFVGMLNKWNKAYNLTSVRDPEAMLIRHIMDSLVVSKHLQGERFIDVGTGPGLPGIPLAIMNPDKQFVLLDSLGKRIRFQKQVSFELGIHNISSVESRVEAYQPEQKFDGVLSRAFASIQDMLTWCHHLPAEHGQFYALKGQLNDEEMQHIPSGFAVKEVIELKVPKLDEQRHLLKIIKE.

S-adenosyl-L-methionine is bound by residues G74, L79, V125 to E126, and R140.

It belongs to the methyltransferase superfamily. RNA methyltransferase RsmG family.

Its subcellular location is the cytoplasm. It catalyses the reaction guanosine(527) in 16S rRNA + S-adenosyl-L-methionine = N(7)-methylguanosine(527) in 16S rRNA + S-adenosyl-L-homocysteine. Specifically methylates the N7 position of guanine in position 527 of 16S rRNA. The sequence is that of Ribosomal RNA small subunit methyltransferase G from Shewanella baltica (strain OS223).